Consider the following 866-residue polypeptide: Scm-like with four MBT domains protein 1 (866 aa).

MBT repeat units follow at residues 20-120 (LSWE…LEAP), 128-232 (SDWD…LQPP), 242-348 (AEWQ…ISPP), and 356-453 (FDWA…LSTP). The antigenic epitope stretch occupies residues 34–42 (VPYGSFKHV). Residues 641-777 (KKKNKRIGRP…DDENKPPSPK (137 aa)) form a disordered region. Basic residues predominate over residues 663–682 (KASKRRKRRKNVFVHKKKRS). Residues 683–694 (SASVDNTPAGSP) show a composition bias toward polar residues. Composition is skewed to acidic residues over residues 699–713 (GEDE…DDSL) and 721–730 (QQDELQEESE). Positions 737-749 (CSSSPTQSEISTS) are enriched in low complexity. Serine 767 and serine 775 each carry phosphoserine. An SAM domain is found at 796-864 (WSVADVVRFI…RIKFAFYEQF (69 aa)).

In terms of assembly, interacts with MYOD1. Component of the SLC (SFMBT1-LSD1-CoREST) corepressor complex, which also contains KDM1A/LSD1 and RCOR1/CoREST. Interacts with KDM1A/LSD1 and RCOR1/CoREST. Interacts with L3MBTL3. Expressed in all cell lines and normal tissues tested, including the thymus.

It localises to the nucleus. Its function is as follows. Histone-binding protein, which is part of various corepressor complexes. Mediates the recruitment of corepressor complexes to target genes, followed by chromatin compaction and repression of transcription. Plays a role during myogenesis: required for the maintenance of undifferentiated states of myogenic progenitor cells via interaction with MYOD1. Interaction with MYOD1 leads to the recruitment of associated corepressors and silencing of MYOD1 target genes. Part of the SLC complex in germ cells, where it may play a role during spermatogenesis. The protein is Scm-like with four MBT domains protein 1 (SFMBT1) of Homo sapiens (Human).